We begin with the raw amino-acid sequence, 257 residues long: UPF0246 protein Mmc1_3117 (257 aa).

The protein belongs to the UPF0246 family.

The sequence is that of UPF0246 protein Mmc1_3117 from Magnetococcus marinus (strain ATCC BAA-1437 / JCM 17883 / MC-1).